The primary structure comprises 332 residues: MIDSQLPLTDIHRHLDGNIRAQTILDLGREFNLTLPATTLAALRPHVQVIEAEPDLVSFLNKLDWGVKVLGSLDACRRVALENVEDAARAGIHYAELRFSPGYMAMTHGLPVAGVVEAVIDGIRAGCAAHNIDVRLIGIMSRTFGEDACLRELDGLLAHRDGITALDLAGDELGFPGRRFLSHFNRARDAGLRITVHAGEAAGAESIWQAIRELGAERIGHGVKAVEDPALMDFLAQEGIGIESCLTSNIQTSTVATLADHPLKTFLNHGILATINTDDPAVQGIEIEHEYHVAAPAAGLSVQQMRVAQENGLKIAFLSEEEKAAVRARLAA.

Zn(2+) contacts are provided by His12 and His14. His14, Asp16, and Gly170 together coordinate substrate. Position 197 (His197) interacts with Zn(2+). Glu200 acts as the Proton donor in catalysis. A Zn(2+)-binding site is contributed by Asp278. Asp279 lines the substrate pocket.

This sequence belongs to the metallo-dependent hydrolases superfamily. Adenosine and AMP deaminases family. Adenosine deaminase subfamily. Zn(2+) serves as cofactor.

The catalysed reaction is adenosine + H2O + H(+) = inosine + NH4(+). The enzyme catalyses 2'-deoxyadenosine + H2O + H(+) = 2'-deoxyinosine + NH4(+). Its function is as follows. Catalyzes the hydrolytic deamination of adenosine and 2-deoxyadenosine. This Erwinia tasmaniensis (strain DSM 17950 / CFBP 7177 / CIP 109463 / NCPPB 4357 / Et1/99) protein is Adenosine deaminase.